Consider the following 180-residue polypeptide: NAD(P)H-quinone oxidoreductase subunit I, chloroplastic (180 aa).

2 4Fe-4S ferredoxin-type domains span residues 55-84 (GRIH…VDWK) and 95-124 (LNYS…MTEE). [4Fe-4S] cluster contacts are provided by cysteine 64, cysteine 67, cysteine 70, cysteine 74, cysteine 104, cysteine 107, cysteine 110, and cysteine 114.

The protein belongs to the complex I 23 kDa subunit family. NDH is composed of at least 16 different subunits, 5 of which are encoded in the nucleus. [4Fe-4S] cluster serves as cofactor.

It localises to the plastid. It is found in the chloroplast thylakoid membrane. The enzyme catalyses a plastoquinone + NADH + (n+1) H(+)(in) = a plastoquinol + NAD(+) + n H(+)(out). It carries out the reaction a plastoquinone + NADPH + (n+1) H(+)(in) = a plastoquinol + NADP(+) + n H(+)(out). Functionally, NDH shuttles electrons from NAD(P)H:plastoquinone, via FMN and iron-sulfur (Fe-S) centers, to quinones in the photosynthetic chain and possibly in a chloroplast respiratory chain. The immediate electron acceptor for the enzyme in this species is believed to be plastoquinone. Couples the redox reaction to proton translocation, and thus conserves the redox energy in a proton gradient. This is NAD(P)H-quinone oxidoreductase subunit I, chloroplastic from Sorghum bicolor (Sorghum).